Consider the following 262-residue polypeptide: MNDILAKILAVKAEEVATARQMRSEAELLREAQARQDVRGFAQAIEDKIAQGKAGVIAEIKKASPSKGVLRENFDPAAIAATYAVHGAACLSVLTDVQFFQGSHDNLRRARAACPLPVLRKDFVIDPYQVISARAMGADCVLLIVAALAPSQLRELETLAMELGMDVLVEVHDAKELDIALSLKTPLLGINNRNLRTFETSLQNTLNLLPQIPAGKRVITESGILSPEDVKLMRSHQVHAFLVGEAFMRAEDPGVELARLMG.

Belongs to the TrpC family.

The enzyme catalyses 1-(2-carboxyphenylamino)-1-deoxy-D-ribulose 5-phosphate + H(+) = (1S,2R)-1-C-(indol-3-yl)glycerol 3-phosphate + CO2 + H2O. The protein operates within amino-acid biosynthesis; L-tryptophan biosynthesis; L-tryptophan from chorismate: step 4/5. The chain is Indole-3-glycerol phosphate synthase from Bordetella petrii (strain ATCC BAA-461 / DSM 12804 / CCUG 43448).